The sequence spans 300 residues: Spermine synthase SPE4 (300 aa).

S5 carries the post-translational modification Phosphoserine. Residues D12 to N255 enclose the PABS domain. S-adenosyl 3-(methylsulfanyl)propylamine contacts are provided by residues Q44, D99, E119, and D151–G152. Catalysis depends on D174, which acts as the Proton acceptor. D177 lines the spermidine pocket.

Belongs to the spermidine/spermine synthase family.

It carries out the reaction S-adenosyl 3-(methylsulfanyl)propylamine + spermidine = spermine + S-methyl-5'-thioadenosine + H(+). Its pathway is amine and polyamine biosynthesis; spermine biosynthesis; spermine from spermidine: step 1/1. This is Spermine synthase SPE4 (SPE4) from Saccharomyces cerevisiae (strain ATCC 204508 / S288c) (Baker's yeast).